We begin with the raw amino-acid sequence, 263 residues long: 3-deoxy-manno-octulosonate cytidylyltransferase 1 (263 aa).

The protein belongs to the KdsB family.

Its subcellular location is the cytoplasm. The catalysed reaction is 3-deoxy-alpha-D-manno-oct-2-ulosonate + CTP = CMP-3-deoxy-beta-D-manno-octulosonate + diphosphate. The protein operates within nucleotide-sugar biosynthesis; CMP-3-deoxy-D-manno-octulosonate biosynthesis; CMP-3-deoxy-D-manno-octulosonate from 3-deoxy-D-manno-octulosonate and CTP: step 1/1. Its pathway is bacterial outer membrane biogenesis; lipopolysaccharide biosynthesis. In terms of biological role, activates KDO (a required 8-carbon sugar) for incorporation into bacterial lipopolysaccharide in Gram-negative bacteria. The sequence is that of 3-deoxy-manno-octulosonate cytidylyltransferase 1 from Burkholderia ambifaria (strain MC40-6).